Here is a 242-residue protein sequence, read N- to C-terminus: Probable 2-phosphosulfolactate phosphatase (242 aa).

Belongs to the ComB family. The cofactor is Mg(2+).

The catalysed reaction is (2R)-O-phospho-3-sulfolactate + H2O = (2R)-3-sulfolactate + phosphate. This chain is Probable 2-phosphosulfolactate phosphatase, found in Synechococcus sp. (strain JA-3-3Ab) (Cyanobacteria bacterium Yellowstone A-Prime).